Reading from the N-terminus, the 421-residue chain is MSQNGQFLEYTLQVIRRGVEMGGFPEDFYKLLSRPKRIIQVSIPVKMDNGSYEVFEGYRVQHNDALGPFKGGIRFHPEVTLADDIALAMLMTLKNSLAGLPYGGAKGAVRVDPRRLSRRELEELARGYARAVAPLIGEQLDIPAPDVGTDSQVMAWMVDEYSKLAGRNAPAVFTSKPPELWGNPVREYSTGFGVAVAAREVAKRLWGGIEGKTVAVHGAGNTGAWAAYWLEKMGAKVVAISDTRGTVVNKAGIPGEQILKVYMEKKRDKSATVLALEGEKIADSNASLYQDVDILVPAAIENVVREDNVGLVRARLVVEGANGPTTPGAERRLYERGVVVVPDILANAGGVIMSYLEWVENLQWLFWDEEETRRRLEAIMSNNVARVYARWEKEKSWTMRDAAVVTALERIYNAMKTRGWI.

Substrate is bound by residues Lys70 and Lys94. Catalysis depends on Lys106, which acts as the Proton donor. Residues Thr190 and Asn221 each contribute to the NADP(+) site. Substrate is bound at residue Ser354.

It belongs to the Glu/Leu/Phe/Val dehydrogenases family. As to quaternary structure, homohexamer.

The enzyme catalyses L-glutamate + NADP(+) + H2O = 2-oxoglutarate + NH4(+) + NADPH + H(+). Its activity is regulated as follows. Is not regulated allosterically. Activity is inhibited in the presence of high ionic strength; the inhibitory effect of KCl is slightly higher than that of NaCl. Catalyzes the reversible oxidative deamination of L-glutamate to 2-oxoglutarate and ammonia, thereby playing a key role at the intersection of the carbon and nitrogen metabolic pathways. Shows a high preference for NADP(+)/NADPH as the acceptor/donor over NAD(+)/NADH. May function in vivo in the synthetic direction. Also catalyzes at very low rates the oxidative deamination of L-2-aminobutyrate, and the reductive amination of 2-oxovalerate and 2-oxobutyrate. This is NADP(+)-dependent glutamate dehydrogenase from Pyrobaculum calidifontis (strain DSM 21063 / JCM 11548 / VA1).